A 668-amino-acid polypeptide reads, in one-letter code: Pentatricopeptide repeat-containing protein CRP1, chloroplastic (668 aa).

Residues 1-64 (MPASLLPPTF…SASLTSPSPP (64 aa)) constitute a chloroplast transit peptide. PPR repeat units lie at residues 154–188 (SPLL…DFLP), 189–226 (DLAS…RLEP), 227–261 (DAPL…GLTP), 262–297 (RSNA…EIKP), 298–332 (RTRA…GVAP), 333–367 (DEAT…GVKP), 368–402 (SSYV…GVRP), 403–437 (DRHF…GIEP), 438–472 (DVVT…NCPP), 473–507 (GTTT…GLVP), 508–542 (NIIT…GLKP), 543–577 (SPTM…GLEV), 578–612 (SILV…GLRP), and 613–647 (DVIT…GCAP).

Belongs to the PPR family. P subfamily. As to quaternary structure, component of a multisubunit complex.

Its subcellular location is the plastid. The protein localises to the chloroplast stroma. In terms of biological role, required for the translation of the chloroplast petA and petD mRNAs. Required for the processing of the petD mRNA from a polycistronic precursor. Binds with high affinity to the 5'-UTR of the chloroplastic petA transcript. Activates psaC and petA translation by binding their 5'-UTRs. The chain is Pentatricopeptide repeat-containing protein CRP1, chloroplastic from Zea mays (Maize).